Here is a 230-residue protein sequence, read N- to C-terminus: MILTKNSNEKKPLKKGLFIVFEGIDGAGKTSILKQLLEVLKEPKLVNKIFLTREPGGKNNNAAEMIREFFLKNLEVFDPLTLAYLYASSRAEHVKKTINPHLEKDHIVISDRFVHSSYIYQGIVQNQSLDVIYQINQQAIGELEIDYVFYFDVNVNNALNRMKNRFDNTNAFDSQNKQFYEKLLKQYPSVFKVYNQPKKIIFIDANKNENEVLCEVKEQLLKIFKEHKYI.

23-30 (GIDGAGKT) contacts ATP.

The protein belongs to the thymidylate kinase family.

It catalyses the reaction dTMP + ATP = dTDP + ADP. Its function is as follows. Phosphorylation of dTMP to form dTDP in both de novo and salvage pathways of dTTP synthesis. This Ureaplasma parvum serovar 3 (strain ATCC 27815 / 27 / NCTC 11736) protein is Thymidylate kinase.